The chain runs to 98 residues: MIPTYMNIMLAFTISLLGMLIYRSHLMASLLCLEGMMMSLFIMTTLIALNTRSPLTNIMPIILLVFAACEAAVGLALLVSISNTYGLDYIHNLNLLQC.

A run of 3 helical transmembrane segments spans residues 1–21, 29–49, and 61–81; these read MIPT…GMLI, SLLC…LIAL, and IILL…LVSI.

It belongs to the complex I subunit 4L family. Core subunit of respiratory chain NADH dehydrogenase (Complex I) which is composed of 45 different subunits.

It localises to the mitochondrion inner membrane. The catalysed reaction is a ubiquinone + NADH + 5 H(+)(in) = a ubiquinol + NAD(+) + 4 H(+)(out). Functionally, core subunit of the mitochondrial membrane respiratory chain NADH dehydrogenase (Complex I) which catalyzes electron transfer from NADH through the respiratory chain, using ubiquinone as an electron acceptor. Part of the enzyme membrane arm which is embedded in the lipid bilayer and involved in proton translocation. The protein is NADH-ubiquinone oxidoreductase chain 4L (MT-ND4L) of Macaca ochreata (Booted macaque).